Consider the following 384-residue polypeptide: CDP-diacylglycerol--serine O-phosphatidyltransferase (384 aa).

It belongs to the CDP-alcohol phosphatidyltransferase class-I family.

The protein resides in the membrane. It carries out the reaction a CDP-1,2-diacyl-sn-glycerol + L-serine = a 1,2-diacyl-sn-glycero-3-phospho-L-serine + CMP + H(+). It functions in the pathway phospholipid metabolism; phosphatidylethanolamine biosynthesis; phosphatidylethanolamine from CDP-diacylglycerol: step 1/2. The protein is CDP-diacylglycerol--serine O-phosphatidyltransferase (PSS) of Encephalitozoon cuniculi (strain GB-M1) (Microsporidian parasite).